The following is a 236-amino-acid chain: Urease accessory protein UreF (236 aa).

The protein belongs to the UreF family. UreD, UreF and UreG form a complex that acts as a GTP-hydrolysis-dependent molecular chaperone, activating the urease apoprotein by helping to assemble the nickel containing metallocenter of UreC. The UreE protein probably delivers the nickel.

The protein localises to the cytoplasm. Functionally, required for maturation of urease via the functional incorporation of the urease nickel metallocenter. This chain is Urease accessory protein UreF, found in Synechocystis sp. (strain ATCC 27184 / PCC 6803 / Kazusa).